Reading from the N-terminus, the 452-residue chain is MDDIFTQCREGNAVAVRLWLDNTENDLNQGDDHGFSPLHWACREGRSNVVDMLIMRGARINVMNRGDDTPLHLAASHGHRDIVQKLIQFKADINAVNEHGNTPLHYACFWGHDTVAEDLVGNGALVSIANKYSETPIDKAKMPLREILKERAEKLGQNLTKIPYKDTFWKGTTRTRPRNGTLNKLAGIDFKQLSLSQKLNENQSGELWKGRWQGNDIVIKMLKIRDWTTRKSRDFNEEYPKLRIFSHPNVLPVLGACQSPPAPHPIVISHWMPYGSLYNVLHEGTNFVVDQMQAVKFAFDIARGMAFLHTLEPLIPRHHLNSRSIMIDEDMTARISMADVKFSFQCPGRMYAPAWVAPEALQKKPEEINRRSADMWSFAVLLWELVTREVPFADLSNMEIGMKVALEGLRPTIPPGISPHICKLMKICMNEDPAKRPKFDMIVPILEKMQDK.

5 ANK repeats span residues 2 to 30 (DDIFTQCREGNAVAVRLWLDNTENDLNQG), 31 to 63 (DDHGFSPLHWACREGRSNVVDMLIMRGARINVM), 64 to 96 (NRGDDTPLHLAASHGHRDIVQKLIQFKADINAV), 97 to 129 (NEHGNTPLHYACFWGHDTVAEDLVGNGALVSIA), and 130 to 174 (NKYS…GTTR). Positions 193 to 446 (LSLSQKLNEN…PKFDMIVPIL (254 aa)) constitute a Protein kinase domain. ATP contacts are provided by asparagine 200, asparagine 202, serine 204, histidine 270, methionine 272, and asparagine 279. A Mg(2+)-binding site is contributed by aspartate 339. Lysine 341 contacts ATP. The Nuclear localization signal signature appears at 363-371 (KKPEEINRR).

The protein belongs to the protein kinase superfamily. TKL Ser/Thr protein kinase family. In terms of assembly, interacts with PXN/PAXILLIN (via LD motif 4).

It localises to the cell junction. The protein localises to the focal adhesion. Its subcellular location is the cell membrane. It is found in the cell projection. The protein resides in the lamellipodium. It localises to the cytoplasm. The protein localises to the myofibril. Its subcellular location is the sarcomere. It is found in the nucleus. The protein resides in the cytoskeleton. It localises to the microtubule organizing center. The protein localises to the centrosome. Its subcellular location is the cell cortex. Its function is as follows. Scaffold protein which mediates protein-protein interactions during a range of cellular events including focal adhesion assembly, cell adhesion and cell migration. The sequence is that of Scaffold protein ILK from Gallus gallus (Chicken).